We begin with the raw amino-acid sequence, 321 residues long: Phospho-N-acetylmuramoyl-pentapeptide-transferase (321 aa).

Helical transmembrane passes span 1 to 21 (MIFIYAIIALLITFILVPILI), 50 to 70 (MGGLTFLISIIITSIIAIIFV), 76 to 96 (IILLLFVTIGFGLIGFIDDYI), 112 to 132 (FLAQIIIAVIFFVLSDVFHLV), 140 to 160 (IPFVNFDIPLSFAYVIFIVFW), 176 to 196 (GLATGLSIIGFAMYAVMSYML), 200 to 220 (AIGIFCIIMIFALLGFLPYNL), 225 to 245 (VFMGDTGSLALGGIFATISIM), 250 to 270 (LSLILIGFVFVVETLSVMLQV), and 300 to 320 (VVTVFWTVGLITGLIGLWIGV).

It belongs to the glycosyltransferase 4 family. MraY subfamily. Mg(2+) is required as a cofactor.

Its subcellular location is the cell membrane. The enzyme catalyses UDP-N-acetyl-alpha-D-muramoyl-L-alanyl-gamma-D-glutamyl-L-lysyl-D-alanyl-D-alanine + di-trans,octa-cis-undecaprenyl phosphate = Mur2Ac(oyl-L-Ala-gamma-D-Glu-L-Lys-D-Ala-D-Ala)-di-trans,octa-cis-undecaprenyl diphosphate + UMP. It functions in the pathway cell wall biogenesis; peptidoglycan biosynthesis. In terms of biological role, catalyzes the initial step of the lipid cycle reactions in the biosynthesis of the cell wall peptidoglycan: transfers peptidoglycan precursor phospho-MurNAc-pentapeptide from UDP-MurNAc-pentapeptide onto the lipid carrier undecaprenyl phosphate, yielding undecaprenyl-pyrophosphoryl-MurNAc-pentapeptide, known as lipid I. This Staphylococcus epidermidis (strain ATCC 35984 / DSM 28319 / BCRC 17069 / CCUG 31568 / BM 3577 / RP62A) protein is Phospho-N-acetylmuramoyl-pentapeptide-transferase.